A 327-amino-acid chain; its full sequence is Ribose-phosphate pyrophosphokinase (327 aa).

51–53 (DGE) contributes to the ATP binding site. H144 and D183 together coordinate Mg(2+). K207 is an active-site residue. Residues R209, D233, and 237-241 (DTGGT) each bind D-ribose 5-phosphate.

This sequence belongs to the ribose-phosphate pyrophosphokinase family. Class I subfamily. As to quaternary structure, homohexamer. Mg(2+) is required as a cofactor.

The protein localises to the cytoplasm. The catalysed reaction is D-ribose 5-phosphate + ATP = 5-phospho-alpha-D-ribose 1-diphosphate + AMP + H(+). The protein operates within metabolic intermediate biosynthesis; 5-phospho-alpha-D-ribose 1-diphosphate biosynthesis; 5-phospho-alpha-D-ribose 1-diphosphate from D-ribose 5-phosphate (route I): step 1/1. Functionally, involved in the biosynthesis of the central metabolite phospho-alpha-D-ribosyl-1-pyrophosphate (PRPP) via the transfer of pyrophosphoryl group from ATP to 1-hydroxyl of ribose-5-phosphate (Rib-5-P). This is Ribose-phosphate pyrophosphokinase from Prochlorococcus marinus (strain SARG / CCMP1375 / SS120).